We begin with the raw amino-acid sequence, 498 residues long: MEYLLALDQGTSSSRAIVFNRAGQIVASAQQEFPQHFPQPGWVEHDPLDIWSSQLATCRAALEQARLGAADMAALGITNQRETTVVWERATGRPIFNAIVWQDRRTEAICERLRAEGLEDEVRKRTGLVIDPYFSGTKLRWILDHVDGARERAARGELAFGTIDSWLVWQLTRGRLHVTDVSNASRTLLWNIHTGQWDADLMRALDIHPSLLPEVHPSAHRFGQTDADWLGAPLTIGGIAGDQQSALFGQACFKPGMAKNTYGTGCFMLLNTGERAVESRNGLISTAACQSGSRRSYALEGSVFVGGAVVQWLRDGLRAIQRSADVEGLAASVPDSGGVVFVPSFTGLGAPYWDPTAQGAIVGLSRGTTIGHIARAALESIAFQSTALLQAMTRDAVSAITELRVDGGASANNLLLQFQADLLGIPVVRPEIIETTALGAAYLAGIATGFYRSEDEVARQWRASRTFHPVISRDEAQHRMAQWEMAVAQVRLPTTHGH.

Residue T11 coordinates ADP. Residues T11, S12, and S13 each contribute to the ATP site. T11 is a binding site for sn-glycerol 3-phosphate. Residue R15 participates in ADP binding. Sn-glycerol 3-phosphate is bound by residues R81, E82, Y133, and D242. Glycerol-binding residues include R81, E82, Y133, D242, and Q243. The ADP site is built by T264 and G307. ATP is bound by residues T264, G307, Q311, and G408. 2 residues coordinate ADP: G408 and N412.

The protein belongs to the FGGY kinase family.

It carries out the reaction glycerol + ATP = sn-glycerol 3-phosphate + ADP + H(+). The protein operates within polyol metabolism; glycerol degradation via glycerol kinase pathway; sn-glycerol 3-phosphate from glycerol: step 1/1. Its activity is regulated as follows. Inhibited by fructose 1,6-bisphosphate (FBP). Functionally, key enzyme in the regulation of glycerol uptake and metabolism. Catalyzes the phosphorylation of glycerol to yield sn-glycerol 3-phosphate. This Ralstonia nicotianae (strain ATCC BAA-1114 / GMI1000) (Ralstonia solanacearum) protein is Glycerol kinase.